Consider the following 170-residue polypeptide: Probable Brix domain-containing ribosomal biogenesis protein (170 aa).

The Brix domain maps to 6–170 (TRIVITSSRD…IKFLKMILEA (165 aa)).

Its function is as follows. Probably involved in the biogenesis of the ribosome. In Saccharolobus solfataricus (strain ATCC 35092 / DSM 1617 / JCM 11322 / P2) (Sulfolobus solfataricus), this protein is Probable Brix domain-containing ribosomal biogenesis protein.